The sequence spans 280 residues: Phosphatidylserine decarboxylase proenzyme (280 aa).

Residues aspartate 88, histidine 145, and serine 249 each act as charge relay system; for autoendoproteolytic cleavage activity in the active site. The Schiff-base intermediate with substrate; via pyruvic acid; for decarboxylase activity role is filled by serine 249. Position 249 is a pyruvic acid (Ser); by autocatalysis (serine 249).

The protein belongs to the phosphatidylserine decarboxylase family. PSD-B subfamily. Prokaryotic type I sub-subfamily. As to quaternary structure, heterodimer of a large membrane-associated beta subunit and a small pyruvoyl-containing alpha subunit. It depends on pyruvate as a cofactor. Is synthesized initially as an inactive proenzyme. Formation of the active enzyme involves a self-maturation process in which the active site pyruvoyl group is generated from an internal serine residue via an autocatalytic post-translational modification. Two non-identical subunits are generated from the proenzyme in this reaction, and the pyruvate is formed at the N-terminus of the alpha chain, which is derived from the carboxyl end of the proenzyme. The autoendoproteolytic cleavage occurs by a canonical serine protease mechanism, in which the side chain hydroxyl group of the serine supplies its oxygen atom to form the C-terminus of the beta chain, while the remainder of the serine residue undergoes an oxidative deamination to produce ammonia and the pyruvoyl prosthetic group on the alpha chain. During this reaction, the Ser that is part of the protease active site of the proenzyme becomes the pyruvoyl prosthetic group, which constitutes an essential element of the active site of the mature decarboxylase.

It is found in the cell membrane. The enzyme catalyses a 1,2-diacyl-sn-glycero-3-phospho-L-serine + H(+) = a 1,2-diacyl-sn-glycero-3-phosphoethanolamine + CO2. It participates in phospholipid metabolism; phosphatidylethanolamine biosynthesis; phosphatidylethanolamine from CDP-diacylglycerol: step 2/2. In terms of biological role, catalyzes the formation of phosphatidylethanolamine (PtdEtn) from phosphatidylserine (PtdSer). The protein is Phosphatidylserine decarboxylase proenzyme of Chromobacterium violaceum (strain ATCC 12472 / DSM 30191 / JCM 1249 / CCUG 213 / NBRC 12614 / NCIMB 9131 / NCTC 9757 / MK).